We begin with the raw amino-acid sequence, 621 residues long: Chaperone protein HtpG (621 aa).

The a; substrate-binding stretch occupies residues 1–328 (MTQEKKKFDA…SEDLPLNISR (328 aa)). Residues 329–544 (ESLQHNSVLE…DSAMDIRMER (216 aa)) are b. Positions 475–495 (SDIDVEQTTSQSEDKNTHSKK) are disordered. A compositionally biased stretch (basic and acidic residues) spans 486–495 (SEDKNTHSKK). Residues 545–621 (FLIEQKQITA…LNDIVQKAIL (77 aa)) are c.

It belongs to the heat shock protein 90 family. As to quaternary structure, homodimer.

The protein localises to the cytoplasm. Its function is as follows. Molecular chaperone. Has ATPase activity. The polypeptide is Chaperone protein HtpG (Rickettsia akari (strain Hartford)).